Reading from the N-terminus, the 254-residue chain is ATP synthase subunit a (254 aa).

Positions 1–6 (MAFLIH) are cleaved as a propeptide — removed in mature form. The next 7 helical transmembrane spans lie at 32–52 (LTNLGLYTILTVYLVLALHIM), 83–103 (IGAANEMYLPFIYSLFFFILI), 119–139 (SIMVSIGLSMTIFIGVTILGL), 146–166 (FFSFFVPSGTPLGLVPLLVPI), 182–202 (LFANVTAGHVLMKILAGFLAP), 207–227 (TFIISVLTVLPFIIFTGIIGL), and 228–248 (EIAVSFIQAYVFCVLTCSYLK).

The protein belongs to the ATPase A chain family. In terms of assembly, F-type ATPases have 2 components, CF(1) - the catalytic core - and CF(0) - the membrane proton channel. CF(1) has five subunits: alpha(3), beta(3), gamma(1), delta(1), epsilon(1). CF(0) has three main subunits: a, b and c.

Its subcellular location is the mitochondrion inner membrane. Mitochondrial membrane ATP synthase (F(1)F(0) ATP synthase or Complex V) produces ATP from ADP in the presence of a proton gradient across the membrane which is generated by electron transport complexes of the respiratory chain. F-type ATPases consist of two structural domains, F(1) - containing the extramembraneous catalytic core and F(0) - containing the membrane proton channel, linked together by a central stalk and a peripheral stalk. During catalysis, ATP synthesis in the catalytic domain of F(1) is coupled via a rotary mechanism of the central stalk subunits to proton translocation. Key component of the proton channel; it may play a direct role in the translocation of protons across the membrane. The sequence is that of ATP synthase subunit a (ATP6) from Mycosarcoma maydis (Corn smut fungus).